Reading from the N-terminus, the 256-residue chain is Thiazole synthase (256 aa).

The Schiff-base intermediate with DXP role is filled by Lys-98. 1-deoxy-D-xylulose 5-phosphate-binding positions include Gly-159, Ala-185–Gly-186, and Asn-207–Thr-208.

It belongs to the ThiG family. In terms of assembly, homotetramer. Forms heterodimers with either ThiH or ThiS.

The protein resides in the cytoplasm. The enzyme catalyses [ThiS sulfur-carrier protein]-C-terminal-Gly-aminoethanethioate + 2-iminoacetate + 1-deoxy-D-xylulose 5-phosphate = [ThiS sulfur-carrier protein]-C-terminal Gly-Gly + 2-[(2R,5Z)-2-carboxy-4-methylthiazol-5(2H)-ylidene]ethyl phosphate + 2 H2O + H(+). Its pathway is cofactor biosynthesis; thiamine diphosphate biosynthesis. Its function is as follows. Catalyzes the rearrangement of 1-deoxy-D-xylulose 5-phosphate (DXP) to produce the thiazole phosphate moiety of thiamine. Sulfur is provided by the thiocarboxylate moiety of the carrier protein ThiS. In vitro, sulfur can be provided by H(2)S. The protein is Thiazole synthase of Aliivibrio salmonicida (strain LFI1238) (Vibrio salmonicida (strain LFI1238)).